The following is a 251-amino-acid chain: tRNA (guanine-N(7)-)-methyltransferase (251 aa).

Residues Met-1 to Ser-43 form a disordered region. Residues Pro-29–Gly-40 show a composition bias toward basic residues. Residues Glu-82, Glu-107, Asp-134, and Asp-157 each contribute to the S-adenosyl-L-methionine site. Residue Asp-157 is part of the active site. A substrate-binding site is contributed by Lys-161. Positions Arg-163–Arg-168 are interaction with RNA. Substrate-binding positions include Asp-193 and Thr-228–Glu-231.

The protein belongs to the class I-like SAM-binding methyltransferase superfamily. TrmB family.

The catalysed reaction is guanosine(46) in tRNA + S-adenosyl-L-methionine = N(7)-methylguanosine(46) in tRNA + S-adenosyl-L-homocysteine. Its pathway is tRNA modification; N(7)-methylguanine-tRNA biosynthesis. Catalyzes the formation of N(7)-methylguanine at position 46 (m7G46) in tRNA. This chain is tRNA (guanine-N(7)-)-methyltransferase, found in Ralstonia nicotianae (strain ATCC BAA-1114 / GMI1000) (Ralstonia solanacearum).